We begin with the raw amino-acid sequence, 96 residues long: MLNMDCLIKTIEMEEIYKYICEISIKLGIKKENLIKLWCDEQKIYESVFDEYLALKYVSCSSCHKMQLVSDEFNFHCTFCPHYNGYAQCTFSCCYN.

This is an uncharacterized protein from Invertebrate iridescent virus 6 (IIV-6).